A 524-amino-acid polypeptide reads, in one-letter code: Glutamyl-tRNA(Gln) amidotransferase subunit A, mitochondrial (524 aa).

Catalysis depends on Lys76, which acts as the Charge relay system. The segment at 146–168 (KQYRGKGSPDSSQEDQEPQWLVA) is disordered. The Charge relay system role is filled by Ser171. Ser195 (acyl-ester intermediate) is an active-site residue.

This sequence belongs to the amidase family. GatA subfamily. Subunit of the heterotrimeric GatCAB amidotransferase (AdT) complex, composed of A (QRSL1), B (GATB) and C (GATC) subunits.

The protein localises to the mitochondrion. It carries out the reaction L-glutamyl-tRNA(Gln) + L-glutamine + ATP + H2O = L-glutaminyl-tRNA(Gln) + L-glutamate + ADP + phosphate + H(+). In terms of biological role, allows the formation of correctly charged Gln-tRNA(Gln) through the transamidation of misacylated Glu-tRNA(Gln) in the mitochondria. The reaction takes place in the presence of glutamine and ATP through an activated gamma-phospho-Glu-tRNA(Gln). In Ornithorhynchus anatinus (Duckbill platypus), this protein is Glutamyl-tRNA(Gln) amidotransferase subunit A, mitochondrial.